A 174-amino-acid chain; its full sequence is Variant surface antigen F (174 aa).

A signal peptide spans 1 to 29 (MKKSIFSKKLLFSFGSLVALAAIPLITIS). Residue cysteine 30 is the site of N-palmitoyl cysteine attachment. Cysteine 30 carries the S-diacylglycerol cysteine lipid modification. A disordered region spans residues 32–174 (QTNTDQSQQP…PEQGNSQVSK (143 aa)). The span at 43-53 (SGSGSGSGTSN) shows a compositional bias: gly residues. A run of 9 repeats spans residues 55–67 (SGST…GNNQ), 68–80 (GGST…GNNQ), 81–93 (GGST…GNNQ), 94–106 (GGST…GNNQ), 107–119 (GGST…GNNQ), 120–132 (GGST…GNNQ), 133–145 (GGST…GNNQ), 146–158 (GGST…GNNQ), and 159–171 (GGST…GNSQ). The segment at 55–171 (SGSTPTPEQG…TPTPEQGNSQ (117 aa)) is 9 X 13 AA tandem repeats. Residues 62–174 (EQGNNQGGST…PEQGNSQVSK (113 aa)) show a composition bias toward polar residues.

It localises to the cell membrane. In terms of biological role, responsible for the antigenic diversity for host adaptation. Expression in E.coli of a construct containing vlpD, vlpE, and vlpF yields antigenically distinguishable products corresponding to each gene. The sequence is that of Variant surface antigen F (vlpF) from Mesomycoplasma hyorhinis (Mycoplasma hyorhinis).